The chain runs to 347 residues: DNA-directed RNA polymerase subunit alpha (347 aa).

Positions 1–243 are alpha N-terminal domain (alpha-NTD); the sequence is MLFREGTRLI…DQISVFINFD (243 aa). The tract at residues 255–347 is alpha C-terminal domain (alpha-CTD); it reads SGSSDLNDNL…EWKRKQHHEA (93 aa).

Belongs to the RNA polymerase alpha chain family. In terms of assembly, homodimer. The RNAP catalytic core consists of 2 alpha, 1 beta, 1 beta' and 1 omega subunit. When a sigma factor is associated with the core the holoenzyme is formed, which can initiate transcription.

The catalysed reaction is RNA(n) + a ribonucleoside 5'-triphosphate = RNA(n+1) + diphosphate. Its function is as follows. DNA-dependent RNA polymerase catalyzes the transcription of DNA into RNA using the four ribonucleoside triphosphates as substrates. The chain is DNA-directed RNA polymerase subunit alpha from Lawsonia intracellularis (strain PHE/MN1-00).